The chain runs to 459 residues: Mitochondrial distribution and morphology protein 10 (459 aa).

It belongs to the MDM10 family. As to quaternary structure, component of the ER-mitochondria encounter structure (ERMES) or MDM complex, composed of mmm1, mdm10, mdm12 and mdm34. Associates with the mitochondrial outer membrane sorting assembly machinery SAM(core) complex.

It is found in the mitochondrion outer membrane. Component of the ERMES/MDM complex, which serves as a molecular tether to connect the endoplasmic reticulum and mitochondria. Components of this complex are involved in the control of mitochondrial shape and protein biogenesis and may function in phospholipid exchange. mdm10 is involved in the late assembly steps of the general translocase of the mitochondrial outer membrane (TOM complex). Functions in the tom40-specific route of the assembly of outer membrane beta-barrel proteins, including the association of tom40 with the receptor tom22 and small TOM proteins. Can associate with the SAM(core) complex as well as the mdm12-mmm1 complex, both involved in late steps of the major beta-barrel assembly pathway, that is responsible for biogenesis of all outer membrane beta-barrel proteins. May act as a switch that shuttles between both complexes and channels precursor proteins into the tom40-specific pathway. Plays a role in mitochondrial morphology and in the inheritance of mitochondria. The protein is Mitochondrial distribution and morphology protein 10 (mdmB) of Aspergillus terreus (strain NIH 2624 / FGSC A1156).